Reading from the N-terminus, the 112-residue chain is Putative pterin-4-alpha-carbinolamine dehydratase (112 aa).

The protein belongs to the pterin-4-alpha-carbinolamine dehydratase family.

The enzyme catalyses (4aS,6R)-4a-hydroxy-L-erythro-5,6,7,8-tetrahydrobiopterin = (6R)-L-erythro-6,7-dihydrobiopterin + H2O. The protein is Putative pterin-4-alpha-carbinolamine dehydratase of Hahella chejuensis (strain KCTC 2396).